The chain runs to 138 residues: Small ribosomal subunit protein uS11c (138 aa).

The tract at residues 1-22 (MAKAIPKISSRRNGRIGSRKGA) is disordered. Over residues 9-22 (SSRRNGRIGSRKGA) the composition is skewed to basic residues.

The protein belongs to the universal ribosomal protein uS11 family. Part of the 30S ribosomal subunit.

The protein resides in the plastid. It localises to the chloroplast. The sequence is that of Small ribosomal subunit protein uS11c from Nicotiana tabacum (Common tobacco).